The chain runs to 367 residues: Anhydro-N-acetylmuramic acid kinase (367 aa).

ATP is bound at residue 11–18; sequence GTSLDGVD.

The protein belongs to the anhydro-N-acetylmuramic acid kinase family.

It carries out the reaction 1,6-anhydro-N-acetyl-beta-muramate + ATP + H2O = N-acetyl-D-muramate 6-phosphate + ADP + H(+). The protein operates within amino-sugar metabolism; 1,6-anhydro-N-acetylmuramate degradation. Its pathway is cell wall biogenesis; peptidoglycan recycling. Functionally, catalyzes the specific phosphorylation of 1,6-anhydro-N-acetylmuramic acid (anhMurNAc) with the simultaneous cleavage of the 1,6-anhydro ring, generating MurNAc-6-P. Is required for the utilization of anhMurNAc either imported from the medium or derived from its own cell wall murein, and thus plays a role in cell wall recycling. This Rhodopseudomonas palustris (strain ATCC BAA-98 / CGA009) protein is Anhydro-N-acetylmuramic acid kinase.